The chain runs to 120 residues: Chaperonin GroEL (120 aa).

Residue 23–27 (DGTTT) coordinates ATP.

It belongs to the chaperonin (HSP60) family. Forms a cylinder of 14 subunits composed of two heptameric rings stacked back-to-back. Interacts with the co-chaperonin GroES.

It is found in the cytoplasm. It catalyses the reaction ATP + H2O + a folded polypeptide = ADP + phosphate + an unfolded polypeptide.. Its function is as follows. Together with its co-chaperonin GroES, plays an essential role in assisting protein folding. The GroEL-GroES system forms a nano-cage that allows encapsulation of the non-native substrate proteins and provides a physical environment optimized to promote and accelerate protein folding. The chain is Chaperonin GroEL from Mycolicibacter nonchromogenicus (Mycobacterium nonchromogenicum).